Consider the following 288-residue polypeptide: Urease accessory protein UreD 1 (288 aa).

Residues 1–10 are compositionally biased toward pro residues; it reads MHGPLAPAPS. Positions 1–35 are disordered; sequence MHGPLAPAPSPERLGAAPARQRSDGRIRLRVGPAR.

It belongs to the UreD family. In terms of assembly, ureD, UreF and UreG form a complex that acts as a GTP-hydrolysis-dependent molecular chaperone, activating the urease apoprotein by helping to assemble the nickel containing metallocenter of UreC. The UreE protein probably delivers the nickel.

The protein resides in the cytoplasm. Required for maturation of urease via the functional incorporation of the urease nickel metallocenter. The protein is Urease accessory protein UreD 1 of Methylobacterium radiotolerans (strain ATCC 27329 / DSM 1819 / JCM 2831 / NBRC 15690 / NCIMB 10815 / 0-1).